The primary structure comprises 85 residues: Antitoxin VapB43 (85 aa).

Positions 37–60 (GLNPPKPQAAGRYRVQPSGKGGLR) are disordered.

Antitoxin component of a type II toxin-antitoxin (TA) system. The chain is Antitoxin VapB43 (vapB43) from Mycobacterium tuberculosis (strain CDC 1551 / Oshkosh).